Here is a 214-residue protein sequence, read N- to C-terminus: Melanoregulin (214 aa).

The Cholesterol-binding sequence motif motif lies at 162–172 (LSERYLFVVDR). Phosphoserine is present on Ser-213.

It belongs to the melanoregulin family. As to quaternary structure, identified in a complex with RILP and DCTN1; interacts directly with RILP, but does not interact directly with DCTN1. Interacts with PRPH2. In terms of processing, palmitoylated. Palmitoylation is required to maintain the protein at the melanosome membrane. Expressed in photoreceptor cells (at protein level).

Its subcellular location is the apical cell membrane. The protein localises to the melanosome membrane. It localises to the lysosome membrane. It is found in the cytoplasmic vesicle membrane. Functionally, probably functions as a cargo-recognition protein that couples cytoplasmic vesicles to the transport machinery. Plays a role in hair pigmentation, a process that involves shedding of melanosome-containing vesicles from melanocytes, followed by phagocytosis of the melanosome-containing vesicles by keratinocytes. Functions on melanosomes as receptor for RILP and the complex formed by RILP and DCTN1, and thereby contributes to retrograde melanosome transport from the cell periphery to the center. Overexpression causes accumulation of late endosomes and/or lysosomes at the microtubule organising center (MTOC) at the center of the cell. Probably binds cholesterol and requires the presence of cholesterol in membranes to function in microtubule-mediated retrograde organelle transport. Binds phosphatidylinositol 3-phosphate, phosphatidylinositol 4-phosphate, phosphatidylinositol 5-phosphate and phosphatidylinositol 3,5-bisphosphate, but not phosphatidylinositol 3,4-bisphosphate or phosphatidylinositol 4,5-bisphosphate. Required for normal phagosome clearing and normal activation of lysosomal enzymes in lysosomes from retinal pigment epithelium cells. Required for normal degradation of the lipofuscin component N-retinylidene-N-retinylethanolamine (A2E) in the eye. May function in membrane fusion and regulate the biogenesis of disk membranes of photoreceptor rod cells. This is Melanoregulin (MREG) from Homo sapiens (Human).